The following is a 1036-amino-acid chain: UDP-N-acetylglucosamine--peptide N-acetylglucosaminyltransferase 110 kDa subunit (1036 aa).

Residue Ala2 is modified to N-acetylalanine. Ser3 and Ser4 each carry phosphoserine; by GSK3-beta; alternate. 2 O-linked (GlcNAc) serine; alternate glycosylation sites follow: Ser3 and Ser4. TPR repeat units lie at residues 11–44, 79–112, 113–146, 147–180, 181–214, 215–248, 249–282, 283–316, 317–350, 351–384, 385–418, and 419–452; these read STGL…EPDN, AEAY…KPDF, IDGY…NPDL, YCVR…QPNF, AVAW…DPNF, LDAY…SPNH, AVVH…QPHF, PDAY…CPTH, ADSL…FPEF, AAAH…SPTF, ADAY…NPAF, and ADAH…KPDF. Ser389 is a glycosylation site (O-linked (GlcNAc) serine; by autocatalysis). At Thr444 the chain carries Phosphothreonine. The TPR 13; truncated repeat unit spans residues 453–463; it reads PDAYCNLAHCL. Positions 454-456 match the DFP motif motif; it reads DAY. Positions 478–493 match the Nuclear localization signal motif; that stretch reads KLVSIVAEQLEKNRLP. His498 functions as the Proton acceptor in the catalytic mechanism. UDP is bound by residues Gln839, Lys842, 896 to 898, 901 to 904, 920 to 922, and Asp925; these read APK, HVRR, and HTT. Tyr979 bears the Phosphotyrosine mark. A required for phosphatidylinositol 3,4,5-triphosphate binding region spans residues 981–1000; the sequence is KKIRGKVWKQRISSPLFNTK.

Belongs to the glycosyltransferase 41 family. O-GlcNAc transferase subfamily. As to quaternary structure, monomer; may exist in different oligomerization states in cells. Homotrimer, oligomerizes via TPR repeats 6 and 7. Trimerization is not necessary for activity in vitro, however it increases affinity for UDP-GlcNAc. A heterotrimer consisting of two 110 kDa subunits and one highly related 78 kDa subunit is isolated from liver. Component of a THAP1/THAP3-HCFC1-OGT complex. Component of the NSL complex at least composed of MOF/KAT8, KANSL1, KANSL2, KANSL3, MCRS1, PHF20, OGT1/OGT, WDR5 and HCFC1. Found in a complex with KIF5B, RHOT1, RHOT2 and TRAK1. Found in a complex composed of at least SINHCAF, SIN3A, HDAC1, SAP30, RBBP4, OGT and TET1. Component of a complex composed of KMT2E/MLL5, OGT and USP7; the complex stabilizes KMT2E/MLL5, preventing KMT2E/MLL5 ubiquitination and proteasomal-mediated degradation. Interacts (via TPRs 1-6) with SIN3A; the interaction mediates transcriptional repression in parallel with histone deacetylase. Interacts (via TPR 5-6) with TET1, TET2 and TET3. Interacts (via TPR repeats 6 and 7) with ATXN10. Interacts with NSD2. Interacts with PROSER1; this interaction mediates TET2 O-GlcNAcylation and stability by promoting the interaction between OGT and TET2. Several different immunologically-related forms of this protein are found in different tissues (with apparent molecular weights of 110, 80 and 78 kDa); they are probably the result of alternative splicing and/or proteolysis. In terms of processing, O-glycosylated; contains O-GlcNAc. Both p110 and p78 forms are O-glycosylated. Post-translationally, ubiquitinated by the SCF(FBXO31) complex, leading to its proteasomal degradation. Phosphorylation on Ser-3 or Ser-4 by GSK3-beta positively regulates its activity. Phosphorylation at Thr-444 by AMPK promotes nuclear localization. In terms of processing, glycosylated via autocatalysis; O-GlcNAcylation at Ser-389 promotes nuclear localization. As to expression, expressed in brain, heart, liver, thymus, muscle, lung, spleen, uterus and ovary; in the kidney only an immunologically-related 78 kDa band is present, which is also present in liver and muscle. In the pancreas, expressed in both exocrine acinar cells and in endocrine cells of the islets of Langerhans.

It is found in the cytoplasm. The protein localises to the nucleus. The protein resides in the cell membrane. Its subcellular location is the mitochondrion membrane. It localises to the cell projection. It catalyses the reaction L-seryl-[protein] + UDP-N-acetyl-alpha-D-glucosamine = 3-O-(N-acetyl-beta-D-glucosaminyl)-L-seryl-[protein] + UDP + H(+). It carries out the reaction L-threonyl-[protein] + UDP-N-acetyl-alpha-D-glucosamine = 3-O-(N-acetyl-beta-D-glucosaminyl)-L-threonyl-[protein] + UDP + H(+). Its pathway is protein modification; protein glycosylation. Its activity is regulated as follows. Inhibited by UDP, UTP and UDP-GlcNAc; 50 mM NaCl or KCl inhibit activity about 70%. Catalyzes the transfer of a single N-acetylglucosamine from UDP-GlcNAc to a serine or threonine residue in cytoplasmic and nuclear proteins resulting in their modification with a beta-linked N-acetylglucosamine (O-GlcNAc). Glycosylates a large and diverse number of proteins including histone H2B, AKT1, AMPK, ATG4B, CAPRIN1, EZH2, FNIP1, GSDMD, KRT7, LMNA, LMNB1, LMNB2, RPTOR, HOXA1, PFKL, KMT2E/MLL5, MAPT/TAU, TET2, RBL2, RET, NOD2 and HCFC1. Can regulate their cellular processes via cross-talk between glycosylation and phosphorylation or by affecting proteolytic processing. Involved in insulin resistance in muscle and adipocyte cells via glycosylating insulin signaling components and inhibiting the 'Thr-308' phosphorylation of AKT1, enhancing IRS1 phosphorylation and attenuating insulin signaling. Involved in glycolysis regulation by mediating glycosylation of 6-phosphofructokinase PFKL, inhibiting its activity. Plays a key role in chromatin structure by mediating O-GlcNAcylation of 'Ser-112' of histone H2B: recruited to CpG-rich transcription start sites of active genes via its interaction with TET proteins (TET1, TET2 or TET3). As part of the NSL complex indirectly involved in acetylation of nucleosomal histone H4 on several lysine residues. O-GlcNAcylation of 'Ser-75' of EZH2 increases its stability, and facilitating the formation of H3K27me3 by the PRC2/EED-EZH2 complex. Stabilizes KMT2E/MLL5 by mediating its glycosylation, thereby preventing KMT2E/MLL5 ubiquitination. Regulates circadian oscillation of the clock genes and glucose homeostasis in the liver. Stabilizes clock proteins BMAL1 and CLOCK through O-glycosylation, which prevents their ubiquitination and subsequent degradation. Promotes the CLOCK-BMAL1-mediated transcription of genes in the negative loop of the circadian clock such as PER1/2 and CRY1/2. O-glycosylates HCFC1 and regulates its proteolytic processing and transcriptional activity. Component of a THAP1/THAP3-HCFC1-OGT complex that is required for the regulation of the transcriptional activity of RRM1. Regulates mitochondrial motility in neurons by mediating glycosylation of TRAK1. Promotes autophagy by mediating O-glycosylation of ATG4B. Acts as a regulator of mTORC1 signaling by mediating O-glycosylation of RPTOR and FNIP1: O-GlcNAcylation of RPTOR in response to glucose sufficiency promotes activation of the mTORC1 complex. The protein is UDP-N-acetylglucosamine--peptide N-acetylglucosaminyltransferase 110 kDa subunit (Ogt) of Rattus norvegicus (Rat).